The primary structure comprises 331 residues: Heat-inducible transcription repressor HrcA (331 aa).

This sequence belongs to the HrcA family.

In terms of biological role, negative regulator of class I heat shock genes (grpE-dnaK-dnaJ and groELS operons). Prevents heat-shock induction of these operons. The chain is Heat-inducible transcription repressor HrcA from Synechococcus sp. (strain WH7803).